The primary structure comprises 788 residues: Protein translocase subunit SecA 2 (788 aa).

ATP contacts are provided by residues glutamine 86, 104 to 108 (GEGKT), and aspartate 493.

This sequence belongs to the SecA family. In terms of assembly, monomer and homodimer. Part of the essential Sec protein translocation apparatus which comprises SecA, SecYEG and auxiliary proteins SecDF. Other proteins may also be involved.

It localises to the cell membrane. Its subcellular location is the cytoplasm. The catalysed reaction is ATP + H2O + cellular proteinSide 1 = ADP + phosphate + cellular proteinSide 2.. In terms of biological role, part of the Sec protein translocase complex. Interacts with the SecYEG preprotein conducting channel. Has a central role in coupling the hydrolysis of ATP to the transfer of proteins into and across the cell membrane, serving as an ATP-driven molecular motor driving the stepwise translocation of polypeptide chains across the membrane. In Bacillus cereus (strain ZK / E33L), this protein is Protein translocase subunit SecA 2.